The following is a 391-amino-acid chain: Chaperone protein DnaJ (391 aa).

A J domain is found at 2–67 (DYYDVLGVSK…QKRESYDRYG (66 aa)). The segment at 148-226 (GVKKELLVSG…CRGQGRIKDK (79 aa)) adopts a CR-type zinc-finger fold. Zn(2+) is bound by residues C161, C164, C178, C181, C200, C203, C214, and C217. 4 CXXCXGXG motif repeats span residues 161–168 (CETCSGSG), 178–185 (CDRCKGSG), 200–207 (CPECGGEG), and 214–221 (CSSCRGQG).

It belongs to the DnaJ family. As to quaternary structure, homodimer. The cofactor is Zn(2+).

It localises to the cytoplasm. Functionally, participates actively in the response to hyperosmotic and heat shock by preventing the aggregation of stress-denatured proteins and by disaggregating proteins, also in an autonomous, DnaK-independent fashion. Unfolded proteins bind initially to DnaJ; upon interaction with the DnaJ-bound protein, DnaK hydrolyzes its bound ATP, resulting in the formation of a stable complex. GrpE releases ADP from DnaK; ATP binding to DnaK triggers the release of the substrate protein, thus completing the reaction cycle. Several rounds of ATP-dependent interactions between DnaJ, DnaK and GrpE are required for fully efficient folding. Also involved, together with DnaK and GrpE, in the DNA replication of plasmids through activation of initiation proteins. The chain is Chaperone protein DnaJ from Chlamydia abortus (strain DSM 27085 / S26/3) (Chlamydophila abortus).